We begin with the raw amino-acid sequence, 320 residues long: MSEEIITESIVKNFGSAETSVGEKQPKRKRSEVRAEKLKARKLQKAAEIVQKQKENRKILKDVSLKRLSKSLDRSLPSENTIDQISFNHAMSEEDASGYQIGDKHKNLLLYKLSSSSGSVFTENLYSTIQEFLSAQKVDIADSKNTYVFGSTFDKKSHALVKTSDSVRSLKYGSFVKACAPLFRFASGIIKAHAPHFHQALLKLELAPSALRFGVFPNFSLQSVSNGYMSMESNFSSIKYGFVVIIIVGELNDVELKIPAISHSLKLKDGSILVLRSSLLHQWYSLPKQSILYEIRLFAMSSLWHYEKNKSIKIAKKDDI.

Positions 16 to 36 (SAETSVGEKQPKRKRSEVRAE) are disordered.

It is found in the nucleus. It localises to the nucleolus. Its function is as follows. Induces a stably inheritable state of calnexin independence called the Cin state when overexpressed. The sequence is that of Calnexin-independence factor 1 (cif1) from Schizosaccharomyces pombe (strain 972 / ATCC 24843) (Fission yeast).